The chain runs to 110 residues: Small ribosomal subunit protein bS16 (110 aa).

The interval 87–110 (ARNNPEKAVPRKERKAAAEAAAKK) is disordered.

This sequence belongs to the bacterial ribosomal protein bS16 family.

The chain is Small ribosomal subunit protein bS16 from Rhodopseudomonas palustris (strain HaA2).